The following is a 209-amino-acid chain: Small ribosomal subunit protein uS4 (209 aa).

Residues 98 to 164 enclose the S4 RNA-binding domain; the sequence is SRLDNVVYRG…TPFIVARETA (67 aa).

The protein belongs to the universal ribosomal protein uS4 family. Part of the 30S ribosomal subunit. Contacts protein S5. The interaction surface between S4 and S5 is involved in control of translational fidelity.

One of the primary rRNA binding proteins, it binds directly to 16S rRNA where it nucleates assembly of the body of the 30S subunit. Functionally, with S5 and S12 plays an important role in translational accuracy. The chain is Small ribosomal subunit protein uS4 from Frankia alni (strain DSM 45986 / CECT 9034 / ACN14a).